Here is a 637-residue protein sequence, read N- to C-terminus: tRNA uridine 5-carboxymethylaminomethyl modification enzyme MnmG (637 aa).

FAD is bound at residue 14–19 (GAGHAG). 279–293 (GPRYCPSIEDKVVRF) is an NAD(+) binding site.

It belongs to the MnmG family. Homodimer. Heterotetramer of two MnmE and two MnmG subunits. Requires FAD as cofactor.

The protein resides in the cytoplasm. Its function is as follows. NAD-binding protein involved in the addition of a carboxymethylaminomethyl (cmnm) group at the wobble position (U34) of certain tRNAs, forming tRNA-cmnm(5)s(2)U34. The polypeptide is tRNA uridine 5-carboxymethylaminomethyl modification enzyme MnmG (Desulfitobacterium hafniense (strain DSM 10664 / DCB-2)).